The primary structure comprises 104 residues: ATP synthase subunit c (104 aa).

2 helical membrane-spanning segments follow: residues 31–51 (SMIA…IGMG) and 75–95 (MFIA…IALI).

This sequence belongs to the ATPase C chain family. F-type ATPases have 2 components, F(1) - the catalytic core - and F(0) - the membrane proton channel. F(1) has five subunits: alpha(3), beta(3), gamma(1), delta(1), epsilon(1). F(0) has three main subunits: a(1), b(2) and c(10-14). The alpha and beta chains form an alternating ring which encloses part of the gamma chain. F(1) is attached to F(0) by a central stalk formed by the gamma and epsilon chains, while a peripheral stalk is formed by the delta and b chains.

The protein resides in the cell inner membrane. F(1)F(0) ATP synthase produces ATP from ADP in the presence of a proton or sodium gradient. F-type ATPases consist of two structural domains, F(1) containing the extramembraneous catalytic core and F(0) containing the membrane proton channel, linked together by a central stalk and a peripheral stalk. During catalysis, ATP synthesis in the catalytic domain of F(1) is coupled via a rotary mechanism of the central stalk subunits to proton translocation. In terms of biological role, key component of the F(0) channel; it plays a direct role in translocation across the membrane. A homomeric c-ring of between 10-14 subunits forms the central stalk rotor element with the F(1) delta and epsilon subunits. This is ATP synthase subunit c from Sulfurimonas denitrificans (strain ATCC 33889 / DSM 1251) (Thiomicrospira denitrificans (strain ATCC 33889 / DSM 1251)).